Reading from the N-terminus, the 805-residue chain is Angiotensin-converting enzyme 2 (805 aa).

Residues 1–17 (MSGSSWLLLSLVAVTAA) form the signal peptide. Residues 18-740 (QSTIEEQAKT…LGPPNQPPVS (723 aa)) are Extracellular-facing. The 589-residue stretch at 19-607 (STIEEQAKTF…QNKNSFVGWS (589 aa)) folds into the Peptidase M2 domain. Residues asparagine 53, asparagine 90, and asparagine 103 are each glycosylated (N-linked (GlcNAc...) asparagine). A disulfide bridge links cysteine 133 with cysteine 141. Arginine 169 contributes to the chloride binding site. Residue arginine 273 coordinates substrate. The N-linked (GlcNAc...) asparagine glycan is linked to asparagine 322. A disulfide bond links cysteine 344 and cysteine 361. Residue 345–346 (HP) coordinates substrate. Histidine 374 contacts Zn(2+). Glutamate 375 acts as the Proton acceptor in catalysis. Positions 378 and 402 each coordinate Zn(2+). The N-linked (GlcNAc...) asparagine glycan is linked to asparagine 432. Chloride contacts are provided by tryptophan 477 and lysine 481. The active-site Proton donor is histidine 505. Position 515 (tyrosine 515) interacts with substrate. A disulfide bridge connects residues cysteine 530 and cysteine 542. Asparagine 546 is a glycosylation site (N-linked (GlcNAc...) asparagine). Residues 614–805 (ADQSIKVRIS…QNTDDVQTSF (192 aa)) enclose the Collectrin-like domain. The segment at 652–659 (RKYFLEVK) is essential for cleavage by ADAM17. N-linked (GlcNAc...) asparagine glycosylation occurs at asparagine 690. Residues 697–716 (RTEVEKAIRMSRSRINDAFR) are essential for cleavage by TMPRSS11D and TMPRSS2. A helical transmembrane segment spans residues 741-761 (IWLIVFGVVMGVIVVGIVVLI). At 762–805 (FTGIRDRKKKNKARNEENPYASIDISKGENNPGFQNTDDVQTSF) the chain is on the cytoplasmic side. Positions 772-805 (NKARNEENPYASIDISKGENNPGFQNTDDVQTSF) are disordered. The short motif at 778 to 786 (ENPYASIDI) is the LIR element. Tyrosine 781 is subject to Phosphotyrosine. An Endocytic sorting signal motif is present at residues 781–784 (YASI). Positions 781-785 (YASID) match the SH2-binding motif. A Phosphoserine modification is found at serine 783. Lysine 788 participates in a covalent cross-link: Glycyl lysine isopeptide (Lys-Gly) (interchain with G-Cter in ubiquitin). Residues 789–805 (GENNPGFQNTDDVQTSF) are compositionally biased toward polar residues. The PTB signature appears at 792-795 (NPGF). The PDZ-binding signature appears at 803 to 805 (TSF).

Belongs to the peptidase M2 family. In terms of assembly, homodimer. Interacts with the catalytically active form of TMPRSS2. Interacts with SLC6A19; this interaction is essential for expression and function of SLC6A19 in intestine. Interacts with ITGA5:ITGB1. Probably interacts (via endocytic sorting signal motif) with AP2M1; the interaction is inhibited by phosphorylation of Tyr-781. Interacts (via PDZ-binding motif) with NHERF1 (via PDZ domains); the interaction may enhance ACE2 membrane residence. The cofactor is Zn(2+). Chloride is required as a cofactor. Post-translationally, proteolytic cleavage by ADAM17 generates a secreted form. Also cleaved by serine proteases: TMPRSS2, TMPRSS11D and HPN/TMPRSS1. In terms of processing, phosphorylated. Phosphorylation at Tyr-781 probably inhibits interaction with AP2M1 and enables interactions with proteins containing SH2 domains. Ubiquitinated. Ubiquitinated on Lys-788 via 'Lys-48'-linked ubiquitin. 'Lys-48'-linked deubiquitinated by USP50 on the Lys-788; leading to its stabilization.

It is found in the secreted. The protein localises to the cell membrane. It localises to the cytoplasm. The protein resides in the cell projection. Its subcellular location is the cilium. It is found in the apical cell membrane. The enzyme catalyses angiotensin II + H2O = angiotensin-(1-7) + L-phenylalanine. It catalyses the reaction angiotensin I + H2O = angiotensin-(1-9) + L-leucine. The catalysed reaction is bradykinin(1-8) + H2O = bradykinin(1-7) + L-phenylalanine. It carries out the reaction neurotensin + H2O = neurotensin-(1-12) + L-leucine. The enzyme catalyses kinetensin + H2O = kinetensin-(1-8) + L-leucine. It catalyses the reaction dynorphin A-(1-13) + H2O = dynorphin A-(1-12) + L-lysine. The catalysed reaction is apelin-13 + H2O = apelin-12 + L-phenylalanine. It carries out the reaction [Pyr1]apelin-13 + H2O = [Pyr1]apelin-12 + L-phenylalanine. The enzyme catalyses apelin-17 + H2O = apelin-16 + L-phenylalanine. Essential counter-regulatory carboxypeptidase of the renin-angiotensin hormone system that is a critical regulator of blood volume, systemic vascular resistance, and thus cardiovascular homeostasis. Converts angiotensin I to angiotensin 1-9, a nine-amino acid peptide with anti-hypertrophic effects in cardiomyocytes, and angiotensin II to angiotensin 1-7, which then acts as a beneficial vasodilator and anti-proliferation agent, counterbalancing the actions of the vasoconstrictor angiotensin II. Also removes the C-terminal residue from three other vasoactive peptides, neurotensin, kinetensin, and des-Arg bradykinin, but is not active on bradykinin. Also cleaves other biological peptides, such as apelins, casomorphins and dynorphin A. Plays an important role in amino acid transport by acting as binding partner of amino acid transporter SLC6A19 in intestine, regulating trafficking, expression on the cell surface, and its catalytic activity. This Pongo abelii (Sumatran orangutan) protein is Angiotensin-converting enzyme 2 (ACE2).